The sequence spans 240 residues: Superoxide dismutase [Cu-Zn] (240 aa).

A signal peptide spans 1–32 (MPKPADHRNHAAVSTSVLSALFLGAGAALLSA). A lipid anchor (N-palmitoyl cysteine) is attached at Cys33. Cys33 is lipidated: S-diacylglycerol cysteine. 2 stretches are compositionally biased toward polar residues: residues 36–51 (PQHASTVPGTTPSIWT) and 68–77 (GAQSLTSTLT). A disordered region spans residues 36–77 (PQHASTVPGTTPSIWTGSPAPSGLSGHDEESPGAQSLTSTLT). His116 and His118 together coordinate Cu cation. Cys123 and Cys234 are disulfide-bonded. 2 residues coordinate Zn(2+): His146 and Asp158. His195 lines the Cu cation pocket.

Belongs to the Cu-Zn superoxide dismutase family. Requires Cu cation as cofactor. It depends on Zn(2+) as a cofactor.

The protein resides in the cell membrane. The catalysed reaction is 2 superoxide + 2 H(+) = H2O2 + O2. Inhibited by the copper chelator diethyl dithiocarbamate. Destroys radicals which are normally produced within the cells and which are toxic to biological systems. May play a role in favoring mycobacterial survival in phagocytes. The chain is Superoxide dismutase [Cu-Zn] (sodC) from Mycobacterium bovis (strain ATCC BAA-935 / AF2122/97).